A 227-amino-acid polypeptide reads, in one-letter code: Ribonuclease 3 (227 aa).

In terms of domain architecture, RNase III spans 4-133 (FEELEKLLDY…LIAAIYLDSD (130 aa)). E46 contacts Mg(2+). The active site involves D50. Residues N119 and E122 each coordinate Mg(2+). E122 is a catalytic residue. The DRBM domain occupies 158–226 (DPKTALQEWA…ARELLHKLKL (69 aa)).

Belongs to the ribonuclease III family. Homodimer. The cofactor is Mg(2+).

It is found in the cytoplasm. It carries out the reaction Endonucleolytic cleavage to 5'-phosphomonoester.. Digests double-stranded RNA. Involved in the processing of primary rRNA transcript to yield the immediate precursors to the large and small rRNAs (23S and 16S). Processes some mRNAs, and tRNAs when they are encoded in the rRNA operon. Processes pre-crRNA and tracrRNA of type II CRISPR loci if present in the organism. The chain is Ribonuclease 3 from Rickettsia bellii (strain OSU 85-389).